Reading from the N-terminus, the 51-residue chain is Magnetosome protein Mms5 (51 aa).

Over 1-8 (MLSAKGVS) the chain is Lumenal. Positions 9–16 (LGLGLGLG) are LG region. Residues 9 to 29 (LGLGLGLGAWGPVLLGVVGVA) form a helical membrane-spanning segment. Topologically, residues 30–51 (GALALYGYYKNRNAEPAAAEAV) are cytoplasmic.

The protein belongs to the magnetosome MamD/Mms5 family. May undergo N-terminal cleavage.

It localises to the magnetosome membrane. Its function is as follows. Might be involved in magnetite crystal growth. In Magnetospirillum gryphiswaldense (strain DSM 6361 / JCM 21280 / NBRC 15271 / MSR-1), this protein is Magnetosome protein Mms5.